The chain runs to 372 residues: Queuine tRNA-ribosyltransferase (372 aa).

The active-site Proton acceptor is aspartate 92. Substrate-binding positions include 92–96 (DSGGY), aspartate 146, glutamine 188, and glycine 215. Residues 246–252 (GIGTIRE) are RNA binding. Aspartate 265 acts as the Nucleophile in catalysis. The segment at 270–274 (TRLGR) is RNA binding; important for wobble base 34 recognition. Zn(2+) is bound by residues cysteine 303, cysteine 305, cysteine 308, and histidine 334.

It belongs to the queuine tRNA-ribosyltransferase family. As to quaternary structure, homodimer. Within each dimer, one monomer is responsible for RNA recognition and catalysis, while the other monomer binds to the replacement base PreQ1. The cofactor is Zn(2+).

It carries out the reaction 7-aminomethyl-7-carbaguanine + guanosine(34) in tRNA = 7-aminomethyl-7-carbaguanosine(34) in tRNA + guanine. It functions in the pathway tRNA modification; tRNA-queuosine biosynthesis. Functionally, catalyzes the base-exchange of a guanine (G) residue with the queuine precursor 7-aminomethyl-7-deazaguanine (PreQ1) at position 34 (anticodon wobble position) in tRNAs with GU(N) anticodons (tRNA-Asp, -Asn, -His and -Tyr). Catalysis occurs through a double-displacement mechanism. The nucleophile active site attacks the C1' of nucleotide 34 to detach the guanine base from the RNA, forming a covalent enzyme-RNA intermediate. The proton acceptor active site deprotonates the incoming PreQ1, allowing a nucleophilic attack on the C1' of the ribose to form the product. After dissociation, two additional enzymatic reactions on the tRNA convert PreQ1 to queuine (Q), resulting in the hypermodified nucleoside queuosine (7-(((4,5-cis-dihydroxy-2-cyclopenten-1-yl)amino)methyl)-7-deazaguanosine). The chain is Queuine tRNA-ribosyltransferase from Prochlorococcus marinus (strain SARG / CCMP1375 / SS120).